A 213-amino-acid chain; its full sequence is ATP synthase peripheral stalk subunit OSCP, mitochondrial (213 aa).

A mitochondrion-targeting transit peptide spans 1-23 (MAAPAVSGVSQQVRYFGTSVVRP). The SIFI-degron motif lies at 5–23 (AVSGVSQQVRYFGTSVVRP). An N6-acetyllysine mark is found at Lys54, Lys60, Lys70, and Lys73. Lys90 carries the N6-succinyllysine modification. 2 positions are modified to N6-acetyllysine; alternate: Lys158 and Lys162. Lys158 and Lys162 each carry N6-succinyllysine; alternate. Residues Lys172, Lys176, and Lys192 each carry the N6-acetyllysine modification. Position 199 is an N6-succinyllysine (Lys199).

This sequence belongs to the ATPase delta chain family. Component of the ATP synthase complex composed at least of ATP5F1A/subunit alpha, ATP5F1B/subunit beta, ATP5MC1/subunit c (homooctomer), MT-ATP6/subunit a, MT-ATP8/subunit 8, ATP5ME/subunit e, ATP5MF/subunit f, ATP5MG/subunit g, ATP5MK/subunit k, ATP5MJ/subunit j, ATP5F1C/subunit gamma, ATP5F1D/subunit delta, ATP5F1E/subunit epsilon, ATP5PF/subunit F6, ATP5PB/subunit b, ATP5PD/subunit d, ATP5PO/subunit OSCP. ATP synthase complex consists of a soluble F(1) head domain (subunits alpha(3) and beta(3)) - the catalytic core - and a membrane F(0) domain - the membrane proton channel (subunits c, a, 8, e, f, g, k and j). These two domains are linked by a central stalk (subunits gamma, delta, and epsilon) rotating inside the F1 region and a stationary peripheral stalk (subunits F6, b, d, and OSCP). Post-translationally, acetylation at Lys-162 decreases ATP production. Deacetylated by SIRT3. In terms of processing, in response to mitochondrial stress, the precursor protein is ubiquitinated by the SIFI complex in the cytoplasm before mitochondrial import, leading to its degradation. Within the SIFI complex, UBR4 initiates ubiquitin chain that are further elongated or branched by KCMF1.

It localises to the mitochondrion. The protein resides in the mitochondrion inner membrane. Its function is as follows. Subunit OSCP, of the mitochondrial membrane ATP synthase complex (F(1)F(0) ATP synthase or Complex V) that produces ATP from ADP in the presence of a proton gradient across the membrane which is generated by electron transport complexes of the respiratory chain. ATP synthase complex consist of a soluble F(1) head domain - the catalytic core - and a membrane F(1) domain - the membrane proton channel. These two domains are linked by a central stalk rotating inside the F(1) region and a stationary peripheral stalk. During catalysis, ATP synthesis in the catalytic domain of F(1) is coupled via a rotary mechanism of the central stalk subunits to proton translocation. In vivo, can only synthesize ATP although its ATP hydrolase activity can be activated artificially in vitro. Part of the complex F(0) domain. Part of the complex F(0) domain and the peripheric stalk, which acts as a stator to hold the catalytic alpha(3)beta(3) subcomplex and subunit a/ATP6 static relative to the rotary elements. This chain is ATP synthase peripheral stalk subunit OSCP, mitochondrial, found in Callithrix jacchus (White-tufted-ear marmoset).